A 94-amino-acid polypeptide reads, in one-letter code: Lipolysis-activating peptide 1-beta chain (94 aa).

Positions 1-19 are cleaved as a signal peptide; the sequence is MKILAVVLISVIVLNTANG. The LCN-type CS-alpha/beta domain maps to 20-87; that stretch reads ENYYPQKYTN…YFNALESQCP (68 aa). Cystine bridges form between Cys-34–Cys-56, Cys-42–Cys-66, and Cys-46–Cys-68.

The protein belongs to the long (3 C-C) scorpion toxin superfamily. In terms of assembly, homodimer; disulfide-linked or monomer (edited version) or heterodimer of an alpha chain (AC P0CI44 or AC P0CI45) and this beta chain (non-edited version). Expressed by the venom gland.

The protein resides in the secreted. The homodimer inhibits HMG-CoA reductase (HMGCR) (32% of inhibition produced by 0.6 uM), a glycoprotein involved in the control of cholesterol biosynthesis. The inhibitory effects of bumarsin are seen at much lower concentrations (0.6 uM) than that for statins such as atorvastatin (5 mM) and simvastatin (10 uM). In addition to inhibition of HMG-CoA reductase, this protein lowers cholesterol levels by inducing steroid hormone synthesis via StAR, and by increasing reverse cholesterol transport mediated by the induction of ABCA1 and APOA1. Functionally, the heterodimer non-edited LVP1 induces lipolysis in rat adipocytes. Induction of lipolysis by LVP1 appears to be mediated through the beta-2 adrenergic receptor pathway (ADRB2). In terms of biological role, the monomer edited version, similar to alpha-toxins, may modulate voltage-gated sodium channels (Nav) and may block voltage-gated potassium channels (Kv). The polypeptide is Lipolysis-activating peptide 1-beta chain (Lychas mucronatus (Chinese swimming scorpion)).